Here is a 229-residue protein sequence, read N- to C-terminus: uncharacterized protein (229 aa).

This is an uncharacterized protein from Methanocaldococcus jannaschii (strain ATCC 43067 / DSM 2661 / JAL-1 / JCM 10045 / NBRC 100440) (Methanococcus jannaschii).